The primary structure comprises 33 residues: Rugosin-B (33 aa).

A disulfide bridge connects residues C27 and C33.

It belongs to the frog skin active peptide (FSAP) family. Brevinin subfamily. As to expression, expressed by the skin glands.

The protein resides in the secreted. In terms of biological role, shows antibacterial activity against both Gram-negative and Gram-positive bacteria. This Glandirana rugosa (Japanese wrinkled frog) protein is Rugosin-B.